A 638-amino-acid chain; its full sequence is Chaperone protein HtpG (638 aa).

The segment at 1–345 is a; substrate-binding; that stretch reads MTTETFEFQV…AQDLSLNVSR (345 aa). Residues 346 to 560 form a b region; it reads EILQQDRHIR…AGELTPALEN (215 aa). The c stretch occupies residues 561 to 638; that stretch reads MYRAMGQEVP…LMADRLERTL (78 aa).

Belongs to the heat shock protein 90 family. As to quaternary structure, homodimer.

The protein localises to the cytoplasm. In terms of biological role, molecular chaperone. Has ATPase activity. The polypeptide is Chaperone protein HtpG (Streptomyces coelicolor (strain ATCC BAA-471 / A3(2) / M145)).